The chain runs to 764 residues: Transient receptor potential cation channel subfamily V member 2 (764 aa).

A disordered region spans residues 1–46; the sequence is MTSPSSSPVFRLETLDGGQEDGSEADRGKLDFGSGLPPMESQFQGE. The interval 1–388 is required for interaction with SLC50A1; that stretch reads MTSPSSSPVF…LLQAKWDLLI (388 aa). The Cytoplasmic segment spans residues 1–390; it reads MTSPSSSPVF…QAKWDLLIPK (390 aa). Ser-6 is subject to Phosphoserine. ANK repeat units lie at residues 72–114, 115–161, 162–207, 208–243, 244–292, and 293–319; these read NRFD…TEGS, TGKT…DDYY, RGHS…TCFY, FGELPLSLAACTKQWDVVSYLLENPHQPASLQATDS, QGNT…IRNL, and QDLTPLKLAAKEGKIEIFRHILQREFS. The helical transmembrane segment at 391–411 threads the bilayer; it reads FFLNFLCNLIYMFIFTAVAYH. Residues 412–434 lie on the Extracellular side of the membrane; the sequence is QPTLKKQAAPHLKAEVGNSMLLT. The helical transmembrane segment at 435–455 threads the bilayer; the sequence is GHILILLGGIYLLVGQLWYFW. The Cytoplasmic segment spans residues 456–471; sequence RRHVFIWISFIDSYFE. A helical membrane pass occupies residues 472–492; the sequence is ILFLFQALLTVVSQVLCFLAI. Glu-493 is a topological domain (extracellular). A helical membrane pass occupies residues 494–514; it reads WYLPLLVSALVLGWLNLLYYT. Residues 515 to 537 are Cytoplasmic-facing; sequence RGFQHTGIYSVMIQKVILRDLLR. A helical transmembrane segment spans residues 538–558; the sequence is FLLIYLVFLFGFAVALVSLSQ. A disordered region spans residues 562–585; the sequence is RPEAPTGPNATESVQPMEGQEDEG. Asn-570 carries N-linked (GlcNAc...) asparagine glycosylation. Positions 572-609 form an intramembrane region, pore-forming; that stretch reads TESVQPMEGQEDEGNGAQYRGILEASLELFKFTIGMGE. The chain crosses the membrane as a helical span at residues 622-642; the sequence is VLLLLLAYVLLTYILLLNMLI. Residues 643–764 lie on the Cytoplasmic side of the membrane; it reads ALMSETVNSV…YVPVQLLQSN (122 aa). Positions 725–756 are disordered; sequence PSGAGVPRTLENPVLASPPKEDEDGASEENYV. Phosphoserine occurs at positions 751 and 763.

It belongs to the transient receptor (TC 1.A.4) family. TrpV subfamily. TRPV2 sub-subfamily. In terms of assembly, homotetramer. Interacts with a cAMP-dependent protein kinase type II regulatory subunit (PRKAR2A or PRKAR2B) and ACBD3. Interacts with SLC50A1; the interaction probably occurs intracellularly and depends on TRPV2 N-glycosylation. In terms of processing, N-glycosylated. Post-translationally, phosphorylated by PKA.

Its subcellular location is the cell membrane. It is found in the cytoplasm. The protein localises to the melanosome. It carries out the reaction Ca(2+)(in) = Ca(2+)(out). The enzyme catalyses Mg(2+)(in) = Mg(2+)(out). It catalyses the reaction Na(+)(in) = Na(+)(out). The catalysed reaction is K(+)(in) = K(+)(out). Its function is as follows. Calcium-permeable, non-selective cation channel with an outward rectification. Seems to be regulated, at least in part, by IGF1, PDGF and neuropeptide head activator. May transduce physical stimuli in mast cells. Activated by temperatures higher than 52 degrees Celsius; is not activated by vanilloids and acidic pH. This Homo sapiens (Human) protein is Transient receptor potential cation channel subfamily V member 2 (TRPV2).